An 81-amino-acid chain; its full sequence is Cytotoxin 2 (81 aa).

The N-terminal stretch at 1-21 (MKTLLLTLVVVTIVCLDLGYT) is a signal peptide. Disulfide bonds link cysteine 24–cysteine 42, cysteine 35–cysteine 59, cysteine 63–cysteine 74, and cysteine 75–cysteine 80.

Belongs to the three-finger toxin family. Short-chain subfamily. Type IA cytotoxin sub-subfamily. As to quaternary structure, monomer in solution; Homodimer and oligomer in the presence of negatively charged lipids forming a pore with a size ranging between 20 and 30 Angstroms. As to expression, expressed by the venom gland.

Its subcellular location is the secreted. It localises to the target cell membrane. Functionally, basic protein that binds to cell membrane and depolarizes cardiomyocytes. It also shows lytic activities, but 2-fold less important than that of CTX-A4. It binds to the integrin alpha-V/beta-3 (ITGAV/ITGB3) with a moderate affinity. It may interact with sulfatides in the cell membrane which induces pore formation and cell internalization and is responsible for cytotoxicity in cardiomyocytes. It may also target the mitochondrial membrane and induce mitochondrial swelling and fragmentation. The polypeptide is Cytotoxin 2 (Naja atra (Chinese cobra)).